A 118-amino-acid chain; its full sequence is Myotrophin (118 aa).

Cys2 carries the N-acetylcysteine modification. Residues 2–30 (CDKEFMWALKNGDLDEVKDYVAKGEDVNR) form an ANK 1 repeat. Residues Lys4, Lys11, and Lys24 each carry the N6-acetyllysine modification. Position 31 is a phosphothreonine (Thr31). ANK repeat units follow at residues 34 to 66 (GGRK…APDK) and 67 to 99 (HHIT…VKGP).

Belongs to the myotrophin family. As to quaternary structure, interacts with RELA. Interacts with the heterodimer formed by CAPZA1 and CAPZB.

Its subcellular location is the cytoplasm. It localises to the nucleus. The protein resides in the perinuclear region. In terms of biological role, promotes dimerization of NF-kappa-B subunits and regulates NF-kappa-B transcription factor activity. Promotes growth of cardiomyocytes, but not cardiomyocyte proliferation. Promotes cardiac muscle hypertrophy. Plays a role in the regulation of the growth of actin filaments. Inhibits the activity of the F-actin-capping protein complex formed by the CAPZA1 and CAPZB heterodimer. In Bos taurus (Bovine), this protein is Myotrophin (MTPN).